We begin with the raw amino-acid sequence, 40 residues long: Photosystem II reaction center protein Y (40 aa).

The helical transmembrane segment at 5–23 (LVLVASPILLALGWAGFNI) threads the bilayer.

This sequence belongs to the PsbY family. As to quaternary structure, PSII is composed of 1 copy each of membrane proteins PsbA, PsbB, PsbC, PsbD, PsbE, PsbF, PsbH, PsbI, PsbJ, PsbK, PsbL, PsbM, PsbT, PsbX, PsbY, PsbZ, Psb30/Ycf12, peripheral proteins PsbO, CyanoQ (PsbQ), PsbU, PsbV and a large number of cofactors. It forms dimeric complexes.

It is found in the cellular thylakoid membrane. Functionally, loosely associated component of the core of photosystem II (PSII), it is not always seen in crystals. PSII is a light-driven water plastoquinone oxidoreductase, using light energy to abstract electrons from H(2)O, generating a proton gradient subsequently used for ATP formation. This Synechococcus sp. (strain WH7803) protein is Photosystem II reaction center protein Y.